Reading from the N-terminus, the 142-residue chain is Large ribosomal subunit protein uL13 (142 aa).

It belongs to the universal ribosomal protein uL13 family. Part of the 50S ribosomal subunit.

Its function is as follows. This protein is one of the early assembly proteins of the 50S ribosomal subunit, although it is not seen to bind rRNA by itself. It is important during the early stages of 50S assembly. The polypeptide is Large ribosomal subunit protein uL13 (Janthinobacterium sp. (strain Marseille) (Minibacterium massiliensis)).